The chain runs to 355 residues: Uroporphyrinogen decarboxylase (355 aa).

Substrate is bound by residues 27-31, Asp-77, Tyr-154, Thr-209, and His-327; that span reads RQAGR.

This sequence belongs to the uroporphyrinogen decarboxylase family. In terms of assembly, homodimer.

It localises to the cytoplasm. The enzyme catalyses uroporphyrinogen III + 4 H(+) = coproporphyrinogen III + 4 CO2. Its pathway is porphyrin-containing compound metabolism; protoporphyrin-IX biosynthesis; coproporphyrinogen-III from 5-aminolevulinate: step 4/4. Functionally, catalyzes the decarboxylation of four acetate groups of uroporphyrinogen-III to yield coproporphyrinogen-III. This chain is Uroporphyrinogen decarboxylase, found in Yersinia enterocolitica serotype O:8 / biotype 1B (strain NCTC 13174 / 8081).